The chain runs to 313 residues: tRNA dimethylallyltransferase (313 aa).

An ATP-binding site is contributed by 8–15 (GPTGTGKS). 10–15 (TGTGKS) serves as a coordination point for substrate.

It belongs to the IPP transferase family. As to quaternary structure, monomer. Mg(2+) serves as cofactor.

It carries out the reaction adenosine(37) in tRNA + dimethylallyl diphosphate = N(6)-dimethylallyladenosine(37) in tRNA + diphosphate. In terms of biological role, catalyzes the transfer of a dimethylallyl group onto the adenine at position 37 in tRNAs that read codons beginning with uridine, leading to the formation of N6-(dimethylallyl)adenosine (i(6)A). The protein is tRNA dimethylallyltransferase of Mycolicibacterium gilvum (strain PYR-GCK) (Mycobacterium gilvum (strain PYR-GCK)).